A 176-amino-acid polypeptide reads, in one-letter code: MKASGTLREYKVVGRCLPTPKCHTPPLYRMRIFAPNHVVAKSRFWYFVSQLKKMKKSSGEIVYCGQVFEKSPLRVKNFGIWLRYDSRSGTHNMYREYRDLTTAGAVTQCYRDMGARHRARAHSIQIMKVEEIAASKCRRPAVKQFHDSKIKFPLPHRVLRRQHKPRFTTKRPNTFF.

Residue Lys-11 forms a Glycyl lysine isopeptide (Lys-Gly) (interchain with G-Cter in SUMO2) linkage. Residue Tyr-63 is modified to Phosphotyrosine. Ser-71 carries the phosphoserine modification. An N6-succinyllysine modification is found at Lys-76. Phosphoserine is present on Ser-123. Residues Lys-128 and Lys-170 each participate in a glycyl lysine isopeptide (Lys-Gly) (interchain with G-Cter in SUMO2) cross-link.

Belongs to the eukaryotic ribosomal protein eL20 family. Component of the large ribosomal subunit. Binds IPO9 with high affinity.

The protein localises to the cytoplasm. Its function is as follows. Component of the large ribosomal subunit. The ribosome is a large ribonucleoprotein complex responsible for the synthesis of proteins in the cell. The sequence is that of Large ribosomal subunit protein eL20 (RPL18A) from Bos taurus (Bovine).